Here is a 113-residue protein sequence, read N- to C-terminus: Large ribosomal subunit protein uL22 (113 aa).

The protein belongs to the universal ribosomal protein uL22 family. As to quaternary structure, part of the 50S ribosomal subunit.

Functionally, this protein binds specifically to 23S rRNA; its binding is stimulated by other ribosomal proteins, e.g. L4, L17, and L20. It is important during the early stages of 50S assembly. It makes multiple contacts with different domains of the 23S rRNA in the assembled 50S subunit and ribosome. In terms of biological role, the globular domain of the protein is located near the polypeptide exit tunnel on the outside of the subunit, while an extended beta-hairpin is found that lines the wall of the exit tunnel in the center of the 70S ribosome. The chain is Large ribosomal subunit protein uL22 from Bacillus mycoides (strain KBAB4) (Bacillus weihenstephanensis).